Here is a 64-residue protein sequence, read N- to C-terminus: Large ribosomal subunit protein bL28 (64 aa).

The interval 1–23 (MARKDQISHRGPLSGNNRSHALN) is disordered.

It belongs to the bacterial ribosomal protein bL28 family.

This chain is Large ribosomal subunit protein bL28, found in Mesomycoplasma hyopneumoniae (strain 232) (Mycoplasma hyopneumoniae).